A 283-amino-acid chain; its full sequence is 4-diphosphocytidyl-2-C-methyl-D-erythritol kinase (283 aa).

Residue lysine 10 is part of the active site. 99 to 109 is an ATP binding site; the sequence is PMGGGLGGGSS. Aspartate 141 is a catalytic residue.

This sequence belongs to the GHMP kinase family. IspE subfamily. As to quaternary structure, homodimer.

The catalysed reaction is 4-CDP-2-C-methyl-D-erythritol + ATP = 4-CDP-2-C-methyl-D-erythritol 2-phosphate + ADP + H(+). It functions in the pathway isoprenoid biosynthesis; isopentenyl diphosphate biosynthesis via DXP pathway; isopentenyl diphosphate from 1-deoxy-D-xylulose 5-phosphate: step 3/6. Catalyzes the phosphorylation of the position 2 hydroxy group of 4-diphosphocytidyl-2C-methyl-D-erythritol. The sequence is that of 4-diphosphocytidyl-2-C-methyl-D-erythritol kinase from Shigella boydii serotype 18 (strain CDC 3083-94 / BS512).